The sequence spans 89 residues: Small ribosomal subunit protein uS15 (89 aa).

It belongs to the universal ribosomal protein uS15 family. In terms of assembly, part of the 30S ribosomal subunit. Forms a bridge to the 50S subunit in the 70S ribosome, contacting the 23S rRNA.

Functionally, one of the primary rRNA binding proteins, it binds directly to 16S rRNA where it helps nucleate assembly of the platform of the 30S subunit by binding and bridging several RNA helices of the 16S rRNA. Its function is as follows. Forms an intersubunit bridge (bridge B4) with the 23S rRNA of the 50S subunit in the ribosome. The chain is Small ribosomal subunit protein uS15 from Photorhabdus laumondii subsp. laumondii (strain DSM 15139 / CIP 105565 / TT01) (Photorhabdus luminescens subsp. laumondii).